Reading from the N-terminus, the 456-residue chain is GTPase Der (456 aa).

EngA-type G domains lie at 4–169 (PIVA…PSKE) and 178–353 (IQLA…EQHR). GTP contacts are provided by residues 10-17 (GRPNVGKS), 57-61 (DTGGL), 120-123 (NKCE), 184-191 (GRPNVGKS), 231-235 (DTAGI), and 296-299 (NKWD). A KH-like domain is found at 354-439 (RRVSTSVVNE…PLKLFWRGKQ (86 aa)).

This sequence belongs to the TRAFAC class TrmE-Era-EngA-EngB-Septin-like GTPase superfamily. EngA (Der) GTPase family. Associates with the 50S ribosomal subunit.

Its function is as follows. GTPase that plays an essential role in the late steps of ribosome biogenesis. This is GTPase Der from Prochlorococcus marinus (strain MIT 9211).